We begin with the raw amino-acid sequence, 359 residues long: Methylthioribose-1-phosphate isomerase (359 aa).

Substrate is bound by residues 52–54 (RGA), Arg-90, and Gln-200. The active-site Proton donor is the Asp-241. 251 to 252 (NK) is a substrate binding site.

It belongs to the eIF-2B alpha/beta/delta subunits family. MtnA subfamily.

It catalyses the reaction 5-(methylsulfanyl)-alpha-D-ribose 1-phosphate = 5-(methylsulfanyl)-D-ribulose 1-phosphate. It functions in the pathway amino-acid biosynthesis; L-methionine biosynthesis via salvage pathway; L-methionine from S-methyl-5-thio-alpha-D-ribose 1-phosphate: step 1/6. Functionally, catalyzes the interconversion of methylthioribose-1-phosphate (MTR-1-P) into methylthioribulose-1-phosphate (MTRu-1-P). The polypeptide is Methylthioribose-1-phosphate isomerase (Sulfurimonas denitrificans (strain ATCC 33889 / DSM 1251) (Thiomicrospira denitrificans (strain ATCC 33889 / DSM 1251))).